The following is a 327-amino-acid chain: Deoxyribonuclease (327 aa).

The or 35 signal peptide spans 1-24; it reads MSKKLRNFLVRIIVAAFASFAVMA. The interval 299–327 is disordered; sequence DSTTDEIENSVDDSEEIVYNDTTTEEEEN.

It catalyses the reaction Endonucleolytic cleavage to 5'-phosphodinucleotide and 5'-phosphooligonucleotide end-products.. In terms of biological role, may have a role in S.equisimilis virulence. The chain is Deoxyribonuclease (sdc) from Streptococcus dysgalactiae subsp. equisimilis (Streptococcus equisimilis).